Here is a 712-residue protein sequence, read N- to C-terminus: MAYYPHLPYHHHHHTSVPGERLSDPLDPLSADELKLAVEIIRHEYPSKHFAFNVVTLEEPPKAKYLHWKYSKEDAHKPERIALAVLLEKGVPGILEARVNLTKAEVIQIEHITGVCPILTADMLVNTEQIVRKDPAVIEQCILSGVPPDQMDHVYCDPWTIGYDERYGNTRRMQQAMMYYRSNEDDSQYSHPLDFCPIIDTEDQKVVAIDIPPVRRPLSKHKHSNFNKKDIEAELGKMREVKPISVTQPEGVNFRMKGRYIEWQNFRMHIGFNYREGIVLSDISYNDNGHIRPLFYRMSIAEMVVPYGNPEHPHQRKHAFDLGEYGAGYLTNPLALGCDCKGVIHYLDAHFVNNTGEVETVKNAICIHEEDDGVLFKHSDFRDKFRTTISARGIRLVISQIFTAANYEYMVYWIFHMDGVIECELKLTGILNTYAMNEGEDLKGWGTQVYPQVNAHNHQHLFCLRLNPMLDGYSNSVAVVDGVSGPGEPGSKENYYGNAFTTERTVPKTVKEAICDYNSDTSRTWDICNPNKLHPYSGKPVSYKLVSRETPRLMARPGSLVSNRAGFARHHIHVTPYKDGQIYPAGDYVPQTSGEPTKGLPEWIAEEPDASVDNTDIVVWHTFGITHFPAPEDFPLMPAEPIRLLLRPRNFFLRNPALDVPPSKNVTTSEVKQAHHHGNLHMMDMMKSLTDATSEFAFGEKFCEKHKGDHFF.

319–330 (AFDLGEYGAGYL) lines the substrate pocket. Catalysis depends on D321, which acts as the Proton acceptor. C340 and C366 are joined by a disulfide. 404 to 409 (AANYEY) contacts substrate. The Schiff-base intermediate with substrate; via topaquinone role is filled by Y407. At Y407 the chain carries 2',4',5'-topaquinone. The Cu cation site is built by H458 and H460. Mn(2+) contacts are provided by D616 and I617. H627 serves as a coordination point for Cu cation.

Belongs to the copper/topaquinone oxidase family. In terms of assembly, homodimer. Requires Cu cation as cofactor. Zn(2+) serves as cofactor. The cofactor is L-topaquinone. It depends on Mn(2+) as a cofactor. Topaquinone (TPQ) is generated by copper-dependent autoxidation of a specific tyrosyl residue.

It localises to the cytoplasm. It carries out the reaction a primary methyl amine + O2 + H2O = an aldehyde + H2O2 + NH4(+). Its function is as follows. Copper amine oxidase involved in the metabolism of xenobiotic and biogenic amines. Capable of catalyzing the oxidative deamination of primary amines such as ethylamine as alternate sources of nitrogen to support growth. In Schizosaccharomyces pombe (strain 972 / ATCC 24843) (Fission yeast), this protein is Copper amine oxidase 1 (cao1).